Here is an 85-residue protein sequence, read N- to C-terminus: U4-theraphotoxin-Hhn1q (85 aa).

An N-terminal signal peptide occupies residues 1–22; it reads MKVTLIAILTCAAVLVLHTTAA. Positions 23-48 are excised as a propeptide; the sequence is EELEAESQLMEVGMPDTELAAVDEER. 3 cysteine pairs are disulfide-bonded: Cys52–Cys66, Cys56–Cys77, and Cys71–Cys82.

It belongs to the neurotoxin 12 (Hwtx-2) family. 02 (Hwtx-2) subfamily. Expressed by the venom gland.

It is found in the secreted. In terms of biological role, postsynaptic neurotoxin. This is U4-theraphotoxin-Hhn1q from Cyriopagopus hainanus (Chinese bird spider).